The sequence spans 226 residues: V-type proton ATPase subunit E (226 aa).

It belongs to the V-ATPase E subunit family. V-ATPase is a heteromultimeric enzyme made up of two complexes: the ATP-hydrolytic V1 complex and the proton translocation V0 complex. The V1 complex consists of three catalytic AB heterodimers that form a heterohexamer, three peripheral stalks each consisting of EG heterodimers, one central rotor including subunits D and F, and the regulatory subunits C and H. The proton translocation complex V0 consists of the proton transport subunit a, a ring of proteolipid subunits c9c'', rotary subunit d, subunits e and f, and the accessory subunits VhaAC45 and ATP6AP2.

Subunit of the V1 complex of vacuolar(H+)-ATPase (V-ATPase), a multisubunit enzyme composed of a peripheral complex (V1) that hydrolyzes ATP and a membrane integral complex (V0) that translocates protons. V-ATPase is responsible for acidifying and maintaining the pH of intracellular compartments and in some cell types, is targeted to the plasma membrane, where it is responsible for acidifying the extracellular environment. This chain is V-type proton ATPase subunit E (Vha26), found in Drosophila melanogaster (Fruit fly).